The sequence spans 477 residues: Probable F-box protein At5g25300 (477 aa).

The stretch at 346–377 (VDMNKEDSQIEINEKETKINQEHDQSDETQAK) forms a coiled coil. An F-box domain is found at 412–458 (SPPWSELPGDILRSVFERLSFVDFQRAKQTCPIKRSKSNCLRLWLIT).

This Arabidopsis thaliana (Mouse-ear cress) protein is Probable F-box protein At5g25300.